The sequence spans 2442 residues: MAENLLDGPPNPKRAKLSSPGFSANDSTDFGSLFDLENDLPDELIPNGELSLLNSGNLVPDAASKHKQLSELLRGGSGSSITPGIGNVSASSPVQQGLGGQAQGQPNSTSMASLGAMGKSPLNPGDSSTPSLPKQAASTSGPTPPASQALNPQAQKQVGLVTSSPATSQTGPGICMNANFNQTHPGLLNSNSGHSLMNQAQQGQAQVMNGSLGAAGRGRGAGMPYPAPAMQGATSSVLAETLTQVSPQMAGHAGLNTAQAGGMTKMGMTGNTSPFGQPFSQTGGQPMGATGVNPQLASKQSMVNSLPAFPTDIKNTSVTTVPNMSQLQTSVGIVPAQGIATGPTADPEKRKLIQQQLVLLLHAHKCQRREQANGEVRACSLPHCRTMKNVLNHMTHCQAGKACQVAHCASSRQIISHWKNCTRHDCPVCLPLKNASDKRNQQTILGSPASGIQNTIGSVGAGQQNATSLSNPNPIDPSSMQRAYAALGLPYMNQPQTQLQPQVPGQQPAQPPAHQQMRTLNALGNNPMSIPAGGITTDQQPPNLISESALPTSLGATNPLMNDGSNSDSIGSLSTIPTAAPPSSTGVRKGWHEHVTQDLRSHLVHKLVQAIFPTPDPAALKDRRMENLVAYAKKVEGDMYESANSRDEYYHLLAEKIYKIQKELEEKRRSRLHKQGILGNQPALPAPGAQPPVIPPTQSVRPPNGPLSLPVNRVQVSQGMNSFNPMSLGNVQLPQAPMGPRAASPMNHSVQMNSMASVPGMAISPSRMPQPPNMMGTHANNIMAQAPTQNQFLPQNQFPSSSGAMSVNSVGMGQPATQAGVSQGQVPGGTLPNPLNMLAPQTSQLPCPPVTQSPLHPTPPPASTAAGMPSLQHPTPPGMTPPQPAAPTQPSTPVSSGQTPTPTPGSVPSAAQTQSTPTVQAAAQAQVTPQPQTPVQPPSVATPQSSQQQPTPVHTQPPGTPLSQAAASIDNRVPTPSSVTSAETSSQQPGPDVPMLEMKTEVQTDDAEPDPAESKGEPRSEMMEEDLQGSSQVKEETDTTEQKSEPMEVEEKKPEVKVEAKEEEENSANGTASQSTSPSQPRKKIFKPEELRQALMPTLEALYRQDPESLPFRQPVDPQLLGIPDYFDIVKNPMDLSTIKRKLDTGQYQEPWQYVDDVWLMFNNAWLYNRKTSRVYKFCSKLAEVFEQEIDPVMQSLGYCCGRKYEFSPQTLCCYGKQLCTIPRDAAYYSYQNRYHFCEKCFTEIQGENVTLGDDPSQPQTTISKDQFEKKKNDTLDPEPFVDCKECGRKMHQICVLHYDIIWPSGFVCDNCLKKTGRPRKENKFSAKRLQTTRLGNHLEDRVNKFLRRQNHPEAGEVFVRVVASSDKTVEVKPGMKSRFVDSGEMSESFPYRTKALFAFEEIDGVDVCFFGMHVQEYGSDCPPPNTRRVYISYLDSIHFFRPRCLRTAVYHEILIGYLEYVKKLGYVTGHIWACPPSEGDDYIFHCHPPDQKIPKPKRLQEWYKKMLDKAFAERIINDYKDIFKQANEDRLTSAKELPYFEGDFWPNVLEESIKELEQEEEERKKEESTAASETPEGSQGDSKNAKKKNNKKTNKNKSSISRANKKKPSMPNVSNDLSQKLYATMEKHKEVFFVIHLHAGPVISTQPPIVDPDPLLSCDLMDGRDAFLTLARDKHWEFSSLRRSKWSTLCMLVELHTQGQDRFVYTCNECKHHVETRWHCTVCEDYDLCINCYNTKSHTHKMVKWGLGLDDEGSSQGEPQSKSPQESRRLSIQRCIQSLVHACQCRNANCSLPSCQKMKRVVQHTKGCKRKTNGGCPVCKQLIALCCYHAKHCQENKCPVPFCLNIKHKLRQQQIQHRLQQAQLMRRRMATMNTRNVPQQSLPSPTSAPPGTPTQQPSTPQTPQPPAQPQPSPVNMSPAGFPSVARTQPPTIVSAGKPTNQVPAPPPPAQPPPAAVEAARQIEREGQQQQHLYRANINNGMPPGRAGMGTPGSQMAPVGLNVPRPNQVSGPVMSSMPPGQWQQAPIPQQQPMPGMPRPVMSMQAQAAVAGPRMPNVQPPRSISPSALQDLLRTLKSPSSPQQQQQVLNILKSNPQLMAAFIKQRTAKYVANQPGMQPQPGLQSQPGMQPQPGMHQQPSLQNLNAMQAGVPRPGVPPPQQAMGGLNPQGQALNIMNPGHNPNMANMNPQYREMVRRQLLQHQQQQQQQQQQQQQQQQSSASLAGGMAGHSQFQQPQGPGGYAPAMQQQRMQQHLPIQGSSMGQMAAPMGQLGQMGQPGLGADSTPNIQQALQQRILQQQQMKQQIGSPGQPNPMSPQQHMLSGQPQASHLPGQQIATSLSNQVRSPAPVQSPRPQSQPPHSSPSPRIQPQPSPHHVSPQTGSPHPGLAVTMASSMDQGHLGNPEQSAMLPQLNTPNRSALSSELSLVGDTTGDTLEKFVEGL.

Disordered regions lie at residues 1 to 40 and 74 to 168; these read MAENLLDGPPNPKRAKLSSPGFSANDSTDFGSLFDLENDL and RGGS…PATS. The residue at position 2 (Ala-2) is an N-acetylalanine. Positions 20-30 are enriched in polar residues; it reads PGFSANDSTDF. Position 120 is a phosphoserine (Ser-120). The segment covering 125–168 has biased composition (polar residues); that stretch reads GDSSTPSLPKQAASTSGPTPPASQALNPQAQKQVGLVTSSPATS. Arg-219 is modified (omega-N-methylarginine). An interaction with SRCAP region spans residues 226–409; sequence PAPAMQGATS…GKACQVAHCA (184 aa). Positions 261 to 272 are enriched in low complexity; the sequence is GGMTKMGMTGNT. Positions 261 to 290 are disordered; the sequence is GGMTKMGMTGNTSPFGQPFSQTGGQPMGAT. Residues 273–284 show a composition bias toward polar residues; sequence SPFGQPFSQTGG. The segment at 346–432 adopts a TAZ-type 1 zinc-finger fold; that stretch reads DPEKRKLIQQ…RHDCPVCLPL (87 aa). 12 residues coordinate Zn(2+): His-362, Cys-366, Cys-379, Cys-384, His-393, Cys-397, Cys-403, Cys-408, His-417, Cys-421, Cys-426, and Cys-429. A KIX domain is found at 586 to 665; sequence GVRKGWHEHV…KIYKIQKELE (80 aa). Asymmetric dimethylarginine is present on residues Arg-600 and Arg-624. N6-acetyllysine is present on Lys-656. Residues 792–825 are compositionally biased toward polar residues; the sequence is FLPQNQFPSSSGAMSVNSVGMGQPATQAGVSQGQ. The interval 792–1084 is disordered; the sequence is FLPQNQFPSS…STSPSQPRKK (293 aa). Pro residues-rich tracts occupy residues 846–862 and 874–887; these read PCPPVTQSPLHPTPPPA and PTPPGMTPPQPAAP. Positions 894–906 are enriched in polar residues; it reads VSSGQTPTPTPGS. Low complexity-rich tracts occupy residues 909-930 and 938-957; these read SAAQTQSTPTVQAAAQAQVTPQ and PSVATPQSSQQQPTPVHTQP. The span at 974 to 989 shows a compositional bias: polar residues; the sequence is PTPSSVTSAETSSQQP. A Glycyl lysine isopeptide (Lys-Gly) (interchain with G-Cter in SUMO1) cross-link involves residue Lys-999. Over residues 1012–1022 the composition is skewed to basic and acidic residues; sequence AESKGEPRSEM. An N6-acetyllysine modification is found at Lys-1015. Ser-1031 is modified (phosphoserine). Residues 1033–1060 show a composition bias toward basic and acidic residues; it reads VKEETDTTEQKSEPMEVEEKKPEVKVEA. Glycyl lysine isopeptide (Lys-Gly) (interchain with G-Cter in SUMO1) cross-links involve residues Lys-1034 and Lys-1057. Residues 1067 to 1080 are compositionally biased toward polar residues; the sequence is SANGTASQSTSPSQ. At Ser-1077 the chain carries Phosphoserine. The Bromo domain occupies 1086 to 1193; sequence FKPEELRQAL…EVFEQEIDPV (108 aa). Residues 1125 to 1171 form an interaction with histone region; sequence DYFDIVKNPMDLSTIKRKLDTGQYQEPWQYVDDVWLMFNNAWLYNRK. Residues 1163 to 1181 form an interaction with ASF1A region; that stretch reads NNAWLYNRKTSRVYKFCSK. Lys-1217 bears the N6-acetyllysine mark. In terms of domain architecture, CBP/p300-type HAT spans 1324-1701; it reads KFSAKRLQTT…MLVELHTQGQ (378 aa). A phosphoserine; by IKKA mark is found at Ser-1383 and Ser-1387. The tract at residues 1434–1436 is interaction with histone; the sequence is YLD. Acetyl-CoA is bound by residues 1435 to 1437, 1447 to 1448, Ile-1494, Arg-1499, and Trp-1503; these read LDS and RT. Residues 1548–1575 are a coiled coil; the sequence is NVLEESIKELEQEEEERKKEESTAASET. Basic and acidic residues predominate over residues 1557-1569; sequence LEQEEEERKKEES. A disordered region spans residues 1557 to 1616; sequence LEQEEEERKKEESTAASETPEGSQGDSKNAKKKNNKKTNKNKSSISRANKKKPSMPNVSN. Lys-1584, Lys-1592, Lys-1593, Lys-1596, and Lys-1598 each carry N6-acetyllysine. Residues 1586-1596 are compositionally biased toward basic residues; sequence AKKKNNKKTNK. A ZZ-type zinc finger spans residues 1703–1751; sequence RFVYTCNECKHHVETRWHCTVCEDYDLCINCYNTKSHTHKMVKWGLGLD. Cys-1708, Cys-1711, Cys-1721, Cys-1724, Cys-1730, Cys-1733, His-1739, and His-1741 together coordinate Zn(2+). Residues Lys-1742 and Lys-1745 each carry the N6-acetyllysine modification. The residue at position 1764 (Ser-1764) is a Phosphoserine. The segment at 1766–1847 adopts a TAZ-type 2 zinc-finger fold; that stretch reads QESRRLSIQR…KCPVPFCLNI (82 aa). Residues 1875–1960 form a disordered region; the sequence is TRNVPQQSLP…QPPPAAVEAA (86 aa). Pro residues-rich tracts occupy residues 1901–1913 and 1944–1955; these read PQTPQPPAQPQPS and PAPPPPAQPPPA. A phosphoserine mark is found at Ser-2064, Ser-2077, and Ser-2080. A disordered region spans residues 2112-2421; that stretch reads NQPGMQPQPG…LNTPNRSALS (310 aa). 4 stretches are compositionally biased toward low complexity: residues 2113–2138, 2197–2217, 2261–2280, and 2287–2305; these read QPGMQPQPGLQSQPGMQPQPGMHQQP, QLLQHQQQQQQQQQQQQQQQQ, MGQMAAPMGQLGQMGQPGLG, and IQQALQQRILQQQQMKQQI. Polar residues-rich tracts occupy residues 2315–2327 and 2334–2343; these read SPQQHMLSGQPQA and QIATSLSNQV. Over residues 2349 to 2372 the composition is skewed to pro residues; sequence VQSPRPQSQPPHSSPSPRIQPQPS. Ser-2351 bears the Phosphoserine mark. Residues 2411–2421 are compositionally biased toward polar residues; sequence QLNTPNRSALS.

As to quaternary structure, part of a complex composed of MSX3, CREBBP/CBP AND EP300/p300; the interaction with MSX3 decreases histone acetylation activity. Found in a complex containing NCOA2; NCOA3; IKKA; IKKB and IKBKG. Probably part of a complex with HIF1A and EP300. Interacts with phosphorylated CREB1. Interacts with the C-terminal region of CITED4. The TAZ-type 1 domain interacts with HIF1A. Interacts with SRCAP, CARM1, ELF3, MLLT7/FOXO4, N4BP2, NCOA1, NCOA3, NCOA6, PCAF, DDX5, DDX17, PELP1, PML, SMAD1, SMAD2, SMAD3, SPIB, TRERF1 and ZCCHC12. Interacts with KLF1; the interaction results in acetylation and enhancement of transcriptional activity of KLF1. Interacts with DAXX; the interaction is dependent on CBP sumoylation and results in suppression of the transcriptional activity via recruitment of HDAC2 to DAXX. Interacts with MAF. Interacts with MTDH. Interacts with MAFG; the interaction acetylates MAFG in the basic region and stimulates NFE2 transcriptional activity through increasing its DNA-binding activity. Interacts with IRF2; the interaction acetylates IRF2 and regulates its activity on the H4 promoter. Interacts (via N-terminus) with SS18L1/CREST (via C-terminus). Interacts with IRF3 (when phosphorylated); forming the dsRNA-activated factor 1 (DRAF1), a complex which activates the transcription of the type I interferon genes. Interacts with MECOM. Interacts with CITED1 (via C-terminus) Interacts with GATA1; the interaction results in acetylation and enhancement of transcriptional activity of GATA1. Interacts with FOXO1; the interaction acetylates FOXO1 and inhibits its transcriptional activity. Interacts with NPAS2, CLOCK and BMAL1. Interacts with ASF1A and ASF1B; this promotes histone acetylation. Interacts with acetylated TP53/p53 and with the acetylated histones H3 and H4. Interacts (via transactivation domain and C-terminus) with PCNA; the interaction occurs on chromatin in UV-irradiated damaged cells. Interacts with DHX9 (via N-terminus); this interaction mediates association with RNA polymerase II holoenzyme and stimulates CREB-dependent transcriptional activation. Interacts with SMAD4; negatively regulated by ZBTB7A. Forms a complex with KMT2A and CREB1. Interacts with DDX3X; this interaction may facilitate HNF4A acetylation. Interacts with MSX1; the interaction may inhibit MSX1 autoinactivation. Interacts with MSX3. Interacts with ACSS2. Methylation of the KIX domain by CARM1 blocks association with CREB. This results in the blockade of CREB signaling, and in activation of apoptotic response. In terms of processing, phosphorylated by CHUK/IKKA at Ser-1383 and Ser-1387; these phosphorylations promote cell growth by switching the binding preference of CREBBP from TP53 to NF-kappa-B. Post-translationally, sumoylation negatively regulates transcriptional activity via the recruitment of DAAX. Autoacetylation is required for binding to protein substrates, such as acetylated histones and acetylated TP53/p53. Autoacetylation is induced by glucose and fatty acids. As to expression, expressed in hypothalamus and cortex.

Its subcellular location is the cytoplasm. It localises to the nucleus. It catalyses the reaction L-lysyl-[histone] + acetyl-CoA = N(6)-acetyl-L-lysyl-[histone] + CoA + H(+). It carries out the reaction L-lysyl-[protein] + acetyl-CoA = N(6)-acetyl-L-lysyl-[protein] + CoA + H(+). The enzyme catalyses (S)-lactoyl-CoA + L-lysyl-[protein] = N(6)-[(S)-lactoyl]-L-lysyl-[protein] + CoA + H(+). Its function is as follows. Acetylates histones, giving a specific tag for transcriptional activation. Mediates acetylation of histone H3 at 'Lys-18' and 'Lys-27' (H3K18ac and H3K27ac, respectively). Also acetylates non-histone proteins, like DDX21, FBL, IRF2, MAFG, NCOA3, POLR1E/PAF53 and FOXO1. Binds specifically to phosphorylated CREB and enhances its transcriptional activity toward cAMP-responsive genes. Acts as a coactivator of ALX1. Acts as a circadian transcriptional coactivator which enhances the activity of the circadian transcriptional activators: NPAS2-BMAL1 and CLOCK-BMAL1 heterodimers. Acetylates PCNA; acetylation promotes removal of chromatin-bound PCNA and its degradation during nucleotide excision repair (NER). Acetylates POLR1E/PAF53, leading to decreased association of RNA polymerase I with the rDNA promoter region and coding region. Acetylates DDX21, thereby inhibiting DDX21 helicase activity. Acetylates FBL, preventing methylation of 'Gln-105' of histone H2A (H2AQ104me). In addition to protein acetyltransferase, can use different acyl-CoA substrates, such as lactoyl-CoA, and is able to mediate protein lactylation. Catalyzes lactylation of MRE11 in response to DNA damage, thereby promoting DNA double-strand breaks (DSBs) via homologous recombination (HR). Functions as a transcriptional coactivator for SMAD4 in the TGF-beta signaling pathway. The protein is Histone lysine acetyltransferase CREBBP (Crebbp) of Rattus norvegicus (Rat).